An 87-amino-acid polypeptide reads, in one-letter code: Small ribosomal subunit protein eS21 (87 aa).

The protein belongs to the eukaryotic ribosomal protein eS21 family. As to quaternary structure, component of the small ribosomal subunit. Mature ribosomes consist of a small (40S) and a large (60S) subunit. The 40S subunit contains about 33 different proteins and 1 molecule of RNA (18S). The 60S subunit contains about 49 different proteins and 3 molecules of RNA (25S, 5.8S and 5S).

It localises to the cytoplasm. Required for the processing of the 20S rRNA-precursor to mature 18S rRNA in a late step of the maturation of 40S ribosomal subunits. Has a physiological role leading to 18S rRNA stability. The polypeptide is Small ribosomal subunit protein eS21 (RPS21) (Candida glabrata (strain ATCC 2001 / BCRC 20586 / JCM 3761 / NBRC 0622 / NRRL Y-65 / CBS 138) (Yeast)).